Reading from the N-terminus, the 347-residue chain is MAMDAQKQKALDMAIKQIDKTFGKGTLMRLGDKEFEPIAAISTGSLGLDMALGIGGIPQGRIVEVYGPESSGKTTLALQTIASAQKEGMVCAFIDAEHALDVVYAKNLGVDTDNLLVSQPDFGEQALDVLETLTRSGAVDLIIVDSVAALTPKSEIEGDMGDTHVGLQARLMSQALRKLTAILHKTNTTVIFINQIRMKIGTMGYGSPETTTGGNALKFYCSVRIDVRRIATLKQGESQIGNRVKAKVVKNKVAPPFRQAEFDIMFGEGISYIGELIDYGIKMDIVDKSGAWFSYGAEKLGQGKENAKLTLKENPKLREEIEMQVKEALGFGEALGMDQEEISSADQ.

67–74 (GPESSGKT) serves as a coordination point for ATP.

Belongs to the RecA family.

It is found in the cytoplasm. Its function is as follows. Can catalyze the hydrolysis of ATP in the presence of single-stranded DNA, the ATP-dependent uptake of single-stranded DNA by duplex DNA, and the ATP-dependent hybridization of homologous single-stranded DNAs. It interacts with LexA causing its activation and leading to its autocatalytic cleavage. The chain is Protein RecA from Sulfurovum sp. (strain NBC37-1).